The following is a 159-amino-acid chain: UPF0178 protein AZC_4000 (159 aa).

It belongs to the UPF0178 family.

This is UPF0178 protein AZC_4000 from Azorhizobium caulinodans (strain ATCC 43989 / DSM 5975 / JCM 20966 / LMG 6465 / NBRC 14845 / NCIMB 13405 / ORS 571).